The sequence spans 195 residues: Holliday junction branch migration complex subunit RuvA (195 aa).

Positions 1 to 62 are domain I; the sequence is MIEFVKGPVA…EDQQTLYGFR (62 aa). Positions 63–141 are domain II; that stretch reads SRRERELFNK…ELAPDYVPNE (79 aa). Residues 141 to 145 are flexible linker; it reads EGLFA. Residues 146–195 form a domain III region; sequence QGASELDEACEALVALGYSEREIAKVRKALSGEILTTDAYIKRALQLLLK.

Belongs to the RuvA family. As to quaternary structure, homotetramer. Forms an RuvA(8)-RuvB(12)-Holliday junction (HJ) complex. HJ DNA is sandwiched between 2 RuvA tetramers; dsDNA enters through RuvA and exits via RuvB. An RuvB hexamer assembles on each DNA strand where it exits the tetramer. Each RuvB hexamer is contacted by two RuvA subunits (via domain III) on 2 adjacent RuvB subunits; this complex drives branch migration. In the full resolvosome a probable DNA-RuvA(4)-RuvB(12)-RuvC(2) complex forms which resolves the HJ.

Its subcellular location is the cytoplasm. Functionally, the RuvA-RuvB-RuvC complex processes Holliday junction (HJ) DNA during genetic recombination and DNA repair, while the RuvA-RuvB complex plays an important role in the rescue of blocked DNA replication forks via replication fork reversal (RFR). RuvA specifically binds to HJ cruciform DNA, conferring on it an open structure. The RuvB hexamer acts as an ATP-dependent pump, pulling dsDNA into and through the RuvAB complex. HJ branch migration allows RuvC to scan DNA until it finds its consensus sequence, where it cleaves and resolves the cruciform DNA. In Exiguobacterium sp. (strain ATCC BAA-1283 / AT1b), this protein is Holliday junction branch migration complex subunit RuvA.